Consider the following 130-residue polypeptide: Ribonuclease VapC46 (130 aa).

Residues 4–118 (IYLDSSAIVK…CTYDDRMRDA (115 aa)) form the PINc domain. Positions 7 and 91 each coordinate Mg(2+).

This sequence belongs to the PINc/VapC protein family. Requires Mg(2+) as cofactor.

Its function is as follows. Toxic component of a type II toxin-antitoxin (TA) system. An RNase. Upon expression in M.smegmatis inhibits colony formation. Its toxic effect is neutralized by coexpression with cognate antitoxin VapB46. This chain is Ribonuclease VapC46, found in Mycobacterium tuberculosis (strain ATCC 25618 / H37Rv).